The following is a 391-amino-acid chain: Oxygen-dependent coproporphyrinogen-III oxidase, chloroplastic (391 aa).

Residues 1 to 13 show a composition bias toward polar residues; it reads MASSLLTTPSQTL. Residues 1 to 34 are disordered; it reads MASSLLTTPSQTLAPNPAAARARRSSPAAAQVSF. Residues 14–30 are compositionally biased toward low complexity; the sequence is APNPAAARARRSSPAAA. Residues 125–134 are important for dimerization; the sequence is VLQDGNVFEK. Residue Ser179 participates in substrate binding. Residue His193 is the Proton donor of the active site. Residues 195–197 and 349–354 contribute to the substrate site; these read NYR and GGRIES. Residues 331–366 form an important for dimerization region; the sequence is YVEFNLVYDRGTTFGLKTGGRIESILVSLPLTARWE.

The protein belongs to the aerobic coproporphyrinogen-III oxidase family. In terms of assembly, homodimer.

Its subcellular location is the plastid. The protein resides in the chloroplast. The enzyme catalyses coproporphyrinogen III + O2 + 2 H(+) = protoporphyrinogen IX + 2 CO2 + 2 H2O. Its pathway is porphyrin-containing compound metabolism; protoporphyrin-IX biosynthesis; protoporphyrinogen-IX from coproporphyrinogen-III (O2 route): step 1/1. In terms of biological role, involved in the heme and chlorophyll biosynthesis. Catalyzes the aerobic oxidative decarboxylation of propionate groups of rings A and B of coproporphyrinogen-III to yield the vinyl groups in protoporphyrinogen-IX. The sequence is that of Oxygen-dependent coproporphyrinogen-III oxidase, chloroplastic (CPX) from Hordeum vulgare (Barley).